A 330-amino-acid polypeptide reads, in one-letter code: Beta-hexosaminidase (330 aa).

Residues aspartate 62, arginine 70, arginine 130, and 160–161 contribute to the substrate site; that span reads KH. Histidine 173 (proton donor/acceptor) is an active-site residue. Aspartate 242 acts as the Nucleophile in catalysis.

This sequence belongs to the glycosyl hydrolase 3 family. NagZ subfamily.

The protein resides in the cytoplasm. It catalyses the reaction Hydrolysis of terminal non-reducing N-acetyl-D-hexosamine residues in N-acetyl-beta-D-hexosaminides.. Its pathway is cell wall biogenesis; peptidoglycan recycling. Functionally, plays a role in peptidoglycan recycling by cleaving the terminal beta-1,4-linked N-acetylglucosamine (GlcNAc) from peptide-linked peptidoglycan fragments, giving rise to free GlcNAc, anhydro-N-acetylmuramic acid and anhydro-N-acetylmuramic acid-linked peptides. The chain is Beta-hexosaminidase from Vibrio cholerae serotype O1 (strain ATCC 39541 / Classical Ogawa 395 / O395).